The following is a 480-amino-acid chain: Pyruvate kinase II (480 aa).

Arg36 contacts substrate. K(+)-binding residues include Asn38, Ser40, and Asp70. 38–41 (NFSH) provides a ligand contact to ATP. Residues Arg77 and Lys160 each coordinate ATP. Lys223 serves as a coordination point for substrate. Glu225 lines the Mg(2+) pocket. Positions 251, 252, and 284 each coordinate substrate. Asp252 provides a ligand contact to Mg(2+).

This sequence belongs to the pyruvate kinase family. Homotetramer. Mg(2+) serves as cofactor. K(+) is required as a cofactor.

It carries out the reaction pyruvate + ATP = phosphoenolpyruvate + ADP + H(+). It functions in the pathway carbohydrate degradation; glycolysis; pyruvate from D-glyceraldehyde 3-phosphate: step 5/5. With respect to regulation, allosterically activated by AMP and by several sugar phosphates. Belongs to type II PK. Functionally, catalyzes the formation of pyruvate in the last step of glycolysis, it is irreversible under physiological conditions. The reaction is critical for the control of metabolic flux in the second part of glycolysis. This chain is Pyruvate kinase II (pykA), found in Salmonella typhimurium (strain LT2 / SGSC1412 / ATCC 700720).